Here is a 146-residue protein sequence, read N- to C-terminus: Anti-sigma F factor (146 aa).

It belongs to the anti-sigma-factor family.

It catalyses the reaction L-seryl-[protein] + ATP = O-phospho-L-seryl-[protein] + ADP + H(+). It carries out the reaction L-threonyl-[protein] + ATP = O-phospho-L-threonyl-[protein] + ADP + H(+). Its function is as follows. Binds to sigma F and blocks its ability to form an RNA polymerase holoenzyme (E-sigma F). Phosphorylates SpoIIAA on a serine residue. This phosphorylation may enable SpoIIAA to act as an anti-anti-sigma factor that counteracts SpoIIAB and thus releases sigma F from inhibition. The polypeptide is Anti-sigma F factor (Lysinibacillus sphaericus (Bacillus sphaericus)).